The sequence spans 213 residues: Peroxiredoxin-5, mitochondrial (213 aa).

Residues 1–51 (MVQLRFCVLGSIAGSVLRASATWTCVAGRAGRKGAGWECGGARSFSSAAVT) constitute a mitochondrion transit peptide. A Thioredoxin domain is found at 55–213 (IKVGDTIPSV…SLAPNILSQL (159 aa)). At Lys-74 the chain carries N6-acetyllysine. Lys-82 is subject to N6-acetyllysine; alternate. Lys-82 is subject to N6-succinyllysine; alternate. Catalysis depends on Cys-99, which acts as the Cysteine sulfenic acid (-SOH) intermediate. Residue Cys-99 is the site of S-palmitoyl cysteine attachment. A disulfide bridge links Cys-99 with Cys-203. At Lys-115 the chain carries N6-succinyllysine. 2 positions are modified to phosphoserine: Ser-170 and Ser-181. The short motif at 211–213 (SQL) is the Microbody targeting signal element.

Belongs to the peroxiredoxin family. Prx5 subfamily. As to quaternary structure, monomer. S-palmitoylated. Palmitoylation occurs on the active site, inhibiting its reactivity; therefore PRDX5 palmitoylation status determines its antioxidant capacity. In terms of processing, S-palmitoylated. Depalmitoylated by ABHD10.

The protein localises to the mitochondrion. It is found in the cytoplasm. It localises to the peroxisome matrix. It catalyses the reaction a hydroperoxide + [thioredoxin]-dithiol = an alcohol + [thioredoxin]-disulfide + H2O. Functionally, thiol-specific peroxidase that catalyzes the reduction of hydrogen peroxide and organic hydroperoxides to water and alcohols, respectively. Plays a role in cell protection against oxidative stress by detoxifying peroxides and as sensor of hydrogen peroxide-mediated signaling events. The sequence is that of Peroxiredoxin-5, mitochondrial from Rattus norvegicus (Rat).